A 5596-amino-acid polypeptide reads, in one-letter code: Midasin (5596 aa).

At Met-1 the chain carries N-acetylmethionine. AAA-ATPase protomer regions lie at residues 307-591, 659-978, 1048-1316, and 1362-1616; these read SVCK…TSKL, LIEQ…ASNP, KEPT…QEEI, and HIVW…NKMG. Position 329–336 (329–336) interacts with ATP; sequence GPIGCGKT. The interval 517 to 537 is disordered; the sequence is SSVGCEQAPEEVSEARRENKR. Residues 677-684 and 1084-1091 contribute to the ATP site; these read GETGTGKT and GETSVGKT. Thr-1177 carries the phosphothreonine modification. Position 1390 to 1397 (1390 to 1397) interacts with ATP; sequence GDTGCGKT. N6-acetyllysine is present on Lys-1683. 2 AAA-ATPase protomer regions span residues 1738–1995 and 2053–2313; these read RLLR…AVFK and MKCV…IYIS. ATP contacts are provided by residues 1753–1760 and 2066–2073; these read GSPGVGKT and GPASVGKT. Ser-1754 carries the post-translational modification Phosphoserine. The interval 2418–4691 is linker; the sequence is SLRAHETWGD…EGEGMKDVSD (2274 aa). Positions 3989–4008 are disordered; sequence LVESDKEEQPDFLPRPTDGA. Thr-4212 carries the phosphothreonine modification. Ser-4538 is subject to Phosphoserine. 2 disordered regions span residues 4669 to 4688 and 4700 to 5260; these read ATEF…GMKD and EDTF…SRES. The span at 4702 to 4724 shows a compositional bias: basic and acidic residues; sequence TFQKGQEKDKEDPDSKSDIKGED. Residues 4741 to 4757 show a composition bias toward acidic residues; sequence ELEEQEEDDEKSDSEGG. Phosphoserine is present on residues Ser-4752 and Ser-4754. Residues 4758 to 4780 are compositionally biased toward basic and acidic residues; it reads DLDKHMGDLNGEEADKLDERLWG. Positions 4781–4794 are enriched in acidic residues; the sequence is DDDEEEDEEEEDNK. A compositionally biased stretch (basic and acidic residues) spans 4822-4834; the sequence is NKDKSQQDKKEEK. Positions 4835-4844 are enriched in acidic residues; sequence EEAEADDGGQ. Basic and acidic residues predominate over residues 4845–4855; sequence GEDKINEQIDE. Acidic residues predominate over residues 4877–4888; it reads EALDLPDDLNLD. Position 4889 is a phosphoserine (Ser-4889). A compositionally biased stretch (acidic residues) spans 4896–4908; it reads EDTDNEEGEEENP. Thr-4898 carries the post-translational modification Phosphothreonine. Residues 4909-4928 show a composition bias toward basic and acidic residues; it reads LEIKEKPEEAGHEAEERGET. Ser-4937 and Ser-4946 each carry phosphoserine. Residues 4940 to 4966 are compositionally biased toward acidic residues; that stretch reads EPEEGPSEDDKAEGEEEMDTGADDQDG. Positions 4968–4989 are enriched in basic and acidic residues; sequence AAQHPEEHSEEQQQSVEEKDKE. The span at 5007-5021 shows a compositional bias: acidic residues; the sequence is QEEEEREDSDTEEQV. Residue Ser-5015 is modified to Phosphoserine. The segment covering 5033–5046 has biased composition (polar residues); it reads CGQTGVENMQNTQA. The segment covering 5054-5064 has biased composition (basic and acidic residues); it reads PEKEQGKEEHG. Positions 5088 to 5101 are enriched in basic residues; it reads KHTRKNTQSFKRKP. The span at 5105 to 5115 shows a compositional bias: basic and acidic residues; the sequence is DNERSMGDHNE. The segment covering 5132-5141 has biased composition (low complexity); sequence QGPAQQPQAQ. Acidic residues predominate over residues 5181 to 5197; the sequence is QEEEEIEDTLMDTEEQE. Basic and acidic residues-rich tracts occupy residues 5198 to 5213 and 5233 to 5260; these read EFKA…EEIK and KTEE…SRES. The VWFA domain occupies 5384-5583; that stretch reads QICLAIDDSS…ALPETLSDAL (200 aa).

Belongs to the midasin family. In terms of assembly, associates with pre-60S ribosomes in the nucleoplasm. Interacts (via its hexameric AAA ATPase ring) with the PELP1 complex (via PELP1); the interaction is regulated by SUMO conjugation of PELP1 and is crucial for recruitment of MDN1 to the pre-ribosomal particle. Interacts (via VWFA/MIDAS domain) with WDR12 (via UBL domain). Interacts (via VWFA/MIDAS domain) with NLE1 (via UBL domain).

Its subcellular location is the nucleus. It localises to the nucleolus. The protein resides in the nucleoplasm. It is found in the cytoplasm. Nuclear chaperone required for maturation and nuclear export of pre-60S ribosome subunits. Functions at successive maturation steps to remove ribosomal factors at critical transition points, first driving the exit of early pre-60S particles from the nucleolus and then driving late pre-60S particles from the nucleus. At an early stage in 60S maturation, mediates the dissociation of the PeBoW complex (PES1-BOP1-WDR12) from early pre-60S particles, rendering them competent for export from the nucleolus to the nucleoplasm. Subsequently recruited to the nucleoplasmic particles through interaction with SUMO-conjugated PELP1 complex. This binding is only possible if the 5S RNP at the central protuberance has undergone the rotation to complete its maturation. This is Midasin (MDN1) from Homo sapiens (Human).